A 367-amino-acid polypeptide reads, in one-letter code: MSVNRILVINPGSTSTKIGVFDNERPVLEETIRHDVEQIGKYKRIIDQYEFRKETILEVLHSHGINISKLNAVCGRGGLLRPIEGGTYTVNDAMLEDLKNGFSGHHASNLGGILAYEIASGLNIPAFIVDPVVVDEMEPVARISGIAGMERKSIFHALNQKAVARKVAEQLNHKYEDLNLLVTHMGGGITVGAHKKGRVVDVNNGLNGEGPFSPERAGTVPVGQLVEMCFSGEYYRDEMIKKLVGQGGLVSLIGTNDAIKVEKMVEKGDPEATLIYKAMAYQVAKEIGGASAVLHGKIDAIVLTGGLAYSKILVDEIKERVDWIADVIVHPGEDELEALAEGALRVLREEEAPKEYVVREKETVARG.

This sequence belongs to the acetokinase family.

It localises to the cytoplasm. The catalysed reaction is butanoate + ATP = butanoyl phosphate + ADP. The polypeptide is Probable butyrate kinase (Bacillus cereus (strain G9842)).